Reading from the N-terminus, the 367-residue chain is tRNA(Ile)-lysidine synthase (367 aa).

Residue 32-37 (SGGSDS) coordinates ATP.

The protein belongs to the tRNA(Ile)-lysidine synthase family.

The protein resides in the cytoplasm. The catalysed reaction is cytidine(34) in tRNA(Ile2) + L-lysine + ATP = lysidine(34) in tRNA(Ile2) + AMP + diphosphate + H(+). Functionally, ligates lysine onto the cytidine present at position 34 of the AUA codon-specific tRNA(Ile) that contains the anticodon CAU, in an ATP-dependent manner. Cytidine is converted to lysidine, thus changing the amino acid specificity of the tRNA from methionine to isoleucine. This chain is tRNA(Ile)-lysidine synthase, found in Hyphomonas neptunium (strain ATCC 15444).